We begin with the raw amino-acid sequence, 493 residues long: 3-octaprenyl-4-hydroxybenzoate carboxy-lyase (493 aa).

Asn172 is a binding site for Mn(2+). Prenylated FMN-binding positions include 175-177 (IYR), 189-191 (RWL), and 194-195 (RG). Mn(2+) is bound at residue Glu238. Asp287 acts as the Proton donor in catalysis.

It belongs to the UbiD family. As to quaternary structure, homohexamer. It depends on prenylated FMN as a cofactor. Mn(2+) is required as a cofactor.

Its subcellular location is the cell membrane. It carries out the reaction a 4-hydroxy-3-(all-trans-polyprenyl)benzoate + H(+) = a 2-(all-trans-polyprenyl)phenol + CO2. It functions in the pathway cofactor biosynthesis; ubiquinone biosynthesis. Its function is as follows. Catalyzes the decarboxylation of 3-octaprenyl-4-hydroxy benzoate to 2-octaprenylphenol, an intermediate step in ubiquinone biosynthesis. This is 3-octaprenyl-4-hydroxybenzoate carboxy-lyase from Cellvibrio japonicus (strain Ueda107) (Pseudomonas fluorescens subsp. cellulosa).